A 520-amino-acid polypeptide reads, in one-letter code: 2-isopropylmalate synthase (520 aa).

One can recognise a Pyruvate carboxyltransferase domain in the interval 5–268; sequence VYIFDTTLRD…YTDVNTKEIY (264 aa). Mn(2+) contacts are provided by Asp14, His202, His204, and Asn238. Positions 394–520 are regulatory domain; sequence KVLHFQVQSG…RQEIREEGTV (127 aa).

This sequence belongs to the alpha-IPM synthase/homocitrate synthase family. LeuA type 1 subfamily. As to quaternary structure, homodimer. Requires Mn(2+) as cofactor.

Its subcellular location is the cytoplasm. It catalyses the reaction 3-methyl-2-oxobutanoate + acetyl-CoA + H2O = (2S)-2-isopropylmalate + CoA + H(+). It functions in the pathway amino-acid biosynthesis; L-leucine biosynthesis; L-leucine from 3-methyl-2-oxobutanoate: step 1/4. Catalyzes the condensation of the acetyl group of acetyl-CoA with 3-methyl-2-oxobutanoate (2-ketoisovalerate) to form 3-carboxy-3-hydroxy-4-methylpentanoate (2-isopropylmalate). The sequence is that of 2-isopropylmalate synthase from Aquifex aeolicus (strain VF5).